The sequence spans 245 residues: LOB domain-containing protein 16 (245 aa).

The LOB domain occupies Ser-14–Ile-116. The disordered stretch occupies residues Tyr-162 to Ser-183.

Belongs to the LOB domain-containing protein family. In terms of assembly, homodimer and heterodimer with LBD18. As to expression, expressed in roots and faintly in shoots.

The protein localises to the nucleus. Transcriptional activator. Involved in lateral root formation. Regulated by the transcriptional activators ARF7 and ARF19. Functions in the initiation and emergence of lateral roots, in conjunction with LBD18, downstream of ARF7 and ARF19. Acts downstream of the auxin influx carriers AUX1 and LAX1 in the regulation of lateral root initiation and development. This Arabidopsis thaliana (Mouse-ear cress) protein is LOB domain-containing protein 16 (LBD16).